The chain runs to 283 residues: MSVQTLTLPSPAKLNLMLHILGRREDGYHELQTLFQFLDYGDELTFAVRDDGVIQLHTEFEGVPHDSNLIVKAAKKLQAQSSCPLGIDIWIDKILPMGGGIGGGSSNAATTLLGLNHLWRLGWDDDRLAALGLTLGADVPVFVRGHAAFAEGVGEKLTPEYPEEPWYVVLVPQVSVSTAEIFSDPLLTRNSPPIKVRPVPKGNSRNDCLPVVARRYPEVRNALNLLGKFTEAKLTGTGSCVFGGFPSKAEADKVSALLTETLTGFVAKGSNVSMLHRKLQSLL.

K13 is an active-site residue. 96–106 (PMGGGIGGGSS) is an ATP binding site. D138 is an active-site residue.

The protein belongs to the GHMP kinase family. IspE subfamily.

It catalyses the reaction 4-CDP-2-C-methyl-D-erythritol + ATP = 4-CDP-2-C-methyl-D-erythritol 2-phosphate + ADP + H(+). The protein operates within isoprenoid biosynthesis; isopentenyl diphosphate biosynthesis via DXP pathway; isopentenyl diphosphate from 1-deoxy-D-xylulose 5-phosphate: step 3/6. Functionally, catalyzes the phosphorylation of the position 2 hydroxy group of 4-diphosphocytidyl-2C-methyl-D-erythritol. In Pseudomonas fluorescens (strain SBW25), this protein is 4-diphosphocytidyl-2-C-methyl-D-erythritol kinase.